The following is a 488-amino-acid chain: GTPase Der (488 aa).

EngA-type G domains follow at residues 3 to 166 (PVVA…AEAM) and 199 to 372 (IKLA…DSAT). Residues 9–16 (GRPNVGKS), 56–60 (DTGGI), 118–121 (NKID), 205–212 (GKPNVGKS), 252–256 (DTAGV), and 317–320 (NKWD) each bind GTP. Residues 373–457 (RRVSTSMLTR…PIQLRFQEGD (85 aa)) form the KH-like domain.

It belongs to the TRAFAC class TrmE-Era-EngA-EngB-Septin-like GTPase superfamily. EngA (Der) GTPase family. As to quaternary structure, associates with the 50S ribosomal subunit.

In terms of biological role, GTPase that plays an essential role in the late steps of ribosome biogenesis. This chain is GTPase Der, found in Shewanella sp. (strain MR-7).